Reading from the N-terminus, the 226-residue chain is Cytidylate kinase (226 aa).

10-18 (GPAGAGKST) provides a ligand contact to ATP.

The protein belongs to the cytidylate kinase family. Type 1 subfamily.

The protein resides in the cytoplasm. It carries out the reaction CMP + ATP = CDP + ADP. The catalysed reaction is dCMP + ATP = dCDP + ADP. The chain is Cytidylate kinase from Caldicellulosiruptor bescii (strain ATCC BAA-1888 / DSM 6725 / KCTC 15123 / Z-1320) (Anaerocellum thermophilum).